The chain runs to 115 residues: Large ribosomal subunit protein bL19 (115 aa).

This sequence belongs to the bacterial ribosomal protein bL19 family.

This protein is located at the 30S-50S ribosomal subunit interface and may play a role in the structure and function of the aminoacyl-tRNA binding site. The chain is Large ribosomal subunit protein bL19 from Kosmotoga olearia (strain ATCC BAA-1733 / DSM 21960 / TBF 19.5.1).